A 102-amino-acid chain; its full sequence is Small ribosomal subunit protein uS10 (102 aa).

This sequence belongs to the universal ribosomal protein uS10 family. As to quaternary structure, part of the 30S ribosomal subunit.

Functionally, involved in the binding of tRNA to the ribosomes. The chain is Small ribosomal subunit protein uS10 from Levilactobacillus brevis (strain ATCC 367 / BCRC 12310 / CIP 105137 / JCM 1170 / LMG 11437 / NCIMB 947 / NCTC 947) (Lactobacillus brevis).